Consider the following 515-residue polypeptide: Maturase K (515 aa).

It belongs to the intron maturase 2 family. MatK subfamily.

It is found in the plastid. Its subcellular location is the chloroplast. Functionally, usually encoded in the trnK tRNA gene intron. Probably assists in splicing its own and other chloroplast group II introns. The sequence is that of Maturase K from Pinus leiophylla (Chihuahua pine).